Here is a 205-residue protein sequence, read N- to C-terminus: Ras-related protein Rab-1A (205 aa).

Ser-2 is modified (N-acetylserine). The GTP site is built by Ser-20, Gly-21, Gly-23, Lys-24, Ser-25, Cys-26, Glu-38, and Thr-43. Ser-25 provides a ligand contact to Mg(2+). The short motif at 34-48 (DTYTESYISTIGVDF) is the Switch 1 element. Mg(2+) is bound at residue Thr-43. Residues Lys-49 and Lys-61 each participate in a glycyl lysine isopeptide (Lys-Gly) (interchain with G-Cter in ubiquitin) cross-link. Asp-66 lines the Mg(2+) pocket. Residues 66–83 (DTAGQERFRTITSSYYRG) carry the Switch 2 motif. Residues Gly-69, Asn-124, Lys-125, Asp-127, Ala-155, and Lys-156 each contribute to the GTP site. The tract at residues 178 to 205 (PGATAGGAEKSNVKIQSTPVKQSGGGCC) is disordered. Position 194 is a phosphoserine (Ser-194). 2 S-geranylgeranyl cysteine lipidation sites follow: Cys-204 and Cys-205.

This sequence belongs to the small GTPase superfamily. Rab family. May interact with YIPF5. Interacts with C9orf72; the interaction mediates recruitment of RAB1A to the ATG1/ULK1 kinase complex. Interacts with GDI1; this promotes dissociation from membranes. Requires Mg(2+) as cofactor. Phosphorylated by CDK1 kinase during mitosis. Post-translationally, ubiquitinated via 'Lys-11'-linked ubiquitination on Lys-49 and Lys-61; impairing the recruitment of guanosine diphosphate (GDP) dissociation inhibitor 1/GDI1.

The protein resides in the golgi apparatus. The protein localises to the endoplasmic reticulum. It localises to the early endosome. Its subcellular location is the cytoplasm. It is found in the cytosol. The protein resides in the membrane. The protein localises to the melanosome. The catalysed reaction is GTP + H2O = GDP + phosphate + H(+). Its activity is regulated as follows. Regulated by guanine nucleotide exchange factors (GEFs) which promote the exchange of bound GDP for free GTP. Regulated by GTPase activating proteins (GAPs) which increase the GTP hydrolysis activity. Inhibited by GDP dissociation inhibitors (GDIs). Its function is as follows. The small GTPases Rab are key regulators of intracellular membrane trafficking, from the formation of transport vesicles to their fusion with membranes. Rabs cycle between an inactive GDP-bound form and an active GTP-bound form that is able to recruit to membranes different sets of downstream effectors directly responsible for vesicle formation, movement, tethering and fusion. RAB1A regulates vesicular protein transport from the endoplasmic reticulum (ER) to the Golgi compartment and on to the cell surface, and plays a role in IL-8 and growth hormone secretion. Required to modulate the compacted morphology of the Golgi. Regulates the level of CASR present at the cell membrane. Plays a role in cell adhesion and cell migration, via its role in protein trafficking. Plays a role in autophagosome assembly and cellular defense reactions against pathogenic bacteria. Plays a role in microtubule-dependent protein transport by early endosomes and in anterograde melanosome transport. The sequence is that of Ras-related protein Rab-1A (RAB1A) from Canis lupus familiaris (Dog).